We begin with the raw amino-acid sequence, 662 residues long: Chaperone protein dnaK1 (662 aa).

The residue at position 198 (threonine 198) is a Phosphothreonine; by autocatalysis. Residues 630–662 (DWDDDPWAAPSGPPRGRSLNRRDRDPWDDDFYR) form a disordered region. Basic and acidic residues predominate over residues 649-662 (NRRDRDPWDDDFYR).

It belongs to the heat shock protein 70 family.

Acts as a chaperone. The chain is Chaperone protein dnaK1 (dnaK1) from Parasynechococcus marenigrum (strain WH8102).